The sequence spans 208 residues: Uracil phosphoribosyltransferase (208 aa).

Residues R78, R103, and 130–138 contribute to the 5-phospho-alpha-D-ribose 1-diphosphate site; that span reads DPMFATGGT. Residues I193 and 198-200 contribute to the uracil site; that span reads GDA. D199 contributes to the 5-phospho-alpha-D-ribose 1-diphosphate binding site.

It belongs to the UPRTase family. Mg(2+) is required as a cofactor.

The enzyme catalyses UMP + diphosphate = 5-phospho-alpha-D-ribose 1-diphosphate + uracil. The protein operates within pyrimidine metabolism; UMP biosynthesis via salvage pathway; UMP from uracil: step 1/1. Allosterically activated by GTP. In terms of biological role, catalyzes the conversion of uracil and 5-phospho-alpha-D-ribose 1-diphosphate (PRPP) to UMP and diphosphate. The protein is Uracil phosphoribosyltransferase of Campylobacter jejuni subsp. jejuni serotype O:2 (strain ATCC 700819 / NCTC 11168).